We begin with the raw amino-acid sequence, 111 residues long: Beta-defensin 126 (111 aa).

The first 20 residues, 1–20 (MKSLLFTLAVFMLLAQLVSG), serve as a signal peptide directing secretion. The segment at 21-63 (NWYVKKCLNDVGICKKKCKPEEMHVKNGWAMCGKQRDCCVPAD) is in vitro binds to LPS, mediates antimicrobial activity and inhibits LPS-mediated inflammation. Cystine bridges form between Cys-27–Cys-58, Cys-34–Cys-52, and Cys-38–Cys-59.

It belongs to the beta-defensin family. In terms of assembly, homodimer or homooligomer; disulfide-linked. In terms of processing, O-glycosylated; glycans contain alpha(2,3)-linked sialic acids.

Its subcellular location is the secreted. Functionally, highly glycosylated atypical beta-defensin involved in several aspects of sperm function. Facilitates sperm transport in the female reproductive tract and contributes to sperm protection against immunodetection; both functions are probably implicating the negative surface charge provided by its O-linked oligosaccharides in the sperm glycocalyx. Involved in binding of sperm to oviductal epithelial cells to form a sperm reservoir until ovulation. Release from the sperm surface during capacitation and ovaluation by an elevation of oviductal fluid pH is unmasking other surface components and allows sperm to penetrate the cumulus matrix and bind to the zona pellucida of the oocyte. In vitro has antimicrobial activity and may inhibit LPS-mediated inflammation. The sequence is that of Beta-defensin 126 (DEFB126) from Gorilla gorilla gorilla (Western lowland gorilla).